Here is a 460-residue protein sequence, read N- to C-terminus: UDP-N-acetylmuramoylalanine--D-glutamate ligase (460 aa).

ATP is bound at residue 120-126; it reads GSNGKTT.

It belongs to the MurCDEF family.

Its subcellular location is the cytoplasm. The enzyme catalyses UDP-N-acetyl-alpha-D-muramoyl-L-alanine + D-glutamate + ATP = UDP-N-acetyl-alpha-D-muramoyl-L-alanyl-D-glutamate + ADP + phosphate + H(+). The protein operates within cell wall biogenesis; peptidoglycan biosynthesis. In terms of biological role, cell wall formation. Catalyzes the addition of glutamate to the nucleotide precursor UDP-N-acetylmuramoyl-L-alanine (UMA). This chain is UDP-N-acetylmuramoylalanine--D-glutamate ligase, found in Lactobacillus delbrueckii subsp. bulgaricus (strain ATCC BAA-365 / Lb-18).